A 664-amino-acid polypeptide reads, in one-letter code: Type IV inositol polyphosphate 5-phosphatase 3 (664 aa).

Residues 35–76 (GRDPEYGADTDNESENEDAREDNDDSSSDEEGGSGSRGRESK) are disordered. A compositionally biased stretch (acidic residues) spans 40-66 (YGADTDNESENEDAREDNDDSSSDEEG). Catalytic regions lie at residues 514-529 (ERIIWLGDLNYRLSSS) and 592-607 (PKRTPAWCDRVLSYGK).

The protein belongs to the inositol polyphosphate 5-phosphatase family.

The enzyme catalyses a 1,2-diacyl-sn-glycero-3-phospho-(1D-myo-inositol-4,5-bisphosphate) + H2O = a 1,2-diacyl-sn-glycero-3-phospho-(1D-myo-inositol 4-phosphate) + phosphate. It carries out the reaction a 1,2-diacyl-sn-glycero-3-phospho-(1D-myo-inositol-3,4,5-trisphosphate) + H2O = a 1,2-diacyl-sn-glycero-3-phospho-(1D-myo-inositol-3,4-bisphosphate) + phosphate. Functionally, has phosphatase activity toward PtdIns(4,5)P2 and PtdIns(3,4,5)P3. This is Type IV inositol polyphosphate 5-phosphatase 3 from Arabidopsis thaliana (Mouse-ear cress).